Reading from the N-terminus, the 763-residue chain is Elongation factor G, mitochondrial (763 aa).

Residues 1–52 (MFMRLKVLEMNSIRRQTLLRQFTNVYNVVSRSARLCSQAIPKRLFYSTGSRA) constitute a mitochondrion transit peptide. Residues 60 to 347 (SRLRNIGISA…AVCDYLPNPS (288 aa)) enclose the tr-type G domain. Residues 69–76 (AHIDSGKT), 145–149 (DTPGH), and 199–202 (NKMD) each bind GTP.

The protein belongs to the TRAFAC class translation factor GTPase superfamily. Classic translation factor GTPase family. EF-G/EF-2 subfamily.

It is found in the mitochondrion. The protein operates within protein biosynthesis; polypeptide chain elongation. Functionally, mitochondrial GTPase that catalyzes the GTP-dependent ribosomal translocation step during translation elongation. During this step, the ribosome changes from the pre-translocational (PRE) to the post-translocational (POST) state as the newly formed A-site-bound peptidyl-tRNA and P-site-bound deacylated tRNA move to the P and E sites, respectively. Catalyzes the coordinated movement of the two tRNA molecules, the mRNA and conformational changes in the ribosome. This is Elongation factor G, mitochondrial (mef1) from Schizosaccharomyces japonicus (strain yFS275 / FY16936) (Fission yeast).